A 142-amino-acid chain; its full sequence is Peptide methionine sulfoxide reductase MsrB (142 aa).

Residues 2–125 (IKKDKNELNE…NSAAIQFIPY (124 aa)) form the MsrB domain. Cysteine 114 functions as the Nucleophile in the catalytic mechanism.

This sequence belongs to the MsrB Met sulfoxide reductase family.

The enzyme catalyses L-methionyl-[protein] + [thioredoxin]-disulfide + H2O = L-methionyl-(R)-S-oxide-[protein] + [thioredoxin]-dithiol. The protein is Peptide methionine sulfoxide reductase MsrB of Staphylococcus haemolyticus (strain JCSC1435).